The primary structure comprises 207 residues: Protein GrpE (207 aa).

This sequence belongs to the GrpE family. Homodimer.

Its subcellular location is the cytoplasm. In terms of biological role, participates actively in the response to hyperosmotic and heat shock by preventing the aggregation of stress-denatured proteins, in association with DnaK and GrpE. It is the nucleotide exchange factor for DnaK and may function as a thermosensor. Unfolded proteins bind initially to DnaJ; upon interaction with the DnaJ-bound protein, DnaK hydrolyzes its bound ATP, resulting in the formation of a stable complex. GrpE releases ADP from DnaK; ATP binding to DnaK triggers the release of the substrate protein, thus completing the reaction cycle. Several rounds of ATP-dependent interactions between DnaJ, DnaK and GrpE are required for fully efficient folding. In Pelodictyon phaeoclathratiforme (strain DSM 5477 / BU-1), this protein is Protein GrpE.